The primary structure comprises 321 residues: Lipoyl synthase (321 aa).

[4Fe-4S] cluster is bound by residues Cys-68, Cys-73, Cys-79, Cys-94, Cys-98, Cys-101, and Ser-308. The region spanning 80-297 is the Radical SAM core domain; the sequence is FNHGTATFMI…KAEAMAMGFT (218 aa).

Belongs to the radical SAM superfamily. Lipoyl synthase family. [4Fe-4S] cluster serves as cofactor.

It localises to the cytoplasm. It carries out the reaction [[Fe-S] cluster scaffold protein carrying a second [4Fe-4S](2+) cluster] + N(6)-octanoyl-L-lysyl-[protein] + 2 oxidized [2Fe-2S]-[ferredoxin] + 2 S-adenosyl-L-methionine + 4 H(+) = [[Fe-S] cluster scaffold protein] + N(6)-[(R)-dihydrolipoyl]-L-lysyl-[protein] + 4 Fe(3+) + 2 hydrogen sulfide + 2 5'-deoxyadenosine + 2 L-methionine + 2 reduced [2Fe-2S]-[ferredoxin]. It functions in the pathway protein modification; protein lipoylation via endogenous pathway; protein N(6)-(lipoyl)lysine from octanoyl-[acyl-carrier-protein]: step 2/2. Functionally, catalyzes the radical-mediated insertion of two sulfur atoms into the C-6 and C-8 positions of the octanoyl moiety bound to the lipoyl domains of lipoate-dependent enzymes, thereby converting the octanoylated domains into lipoylated derivatives. This is Lipoyl synthase from Cronobacter sakazakii (strain ATCC BAA-894) (Enterobacter sakazakii).